We begin with the raw amino-acid sequence, 287 residues long: Putative sugar uptake protein LJ_0170 (287 aa).

10 helical membrane-spanning segments follow: residues 4–23, 28–50, 56–78, 91–108, 118–137, 150–169, 179–198, 211–230, 240–259, and 266–285; these read VYLFLPAIGWGLMPLVIASV, VYNQIVGTVAASFIFGAIVMAIM, WSLFLLSALGGACWVIGQVGQYI, ISTGLQLIGVPLVGVLAF, LYGFIGILVLIIGVVLTSFT, VSTIILLVLTSLGYITSSSI, SIFFGQTFGMLVAVFIYTLV, VQSGGAGILYAIAALAYILS, FVISQLCVVISTLGGLIFLH, and GLIFTIAGLILIIGGAMLTT.

Belongs to the GRP transporter (TC 2.A.7.5) family.

Its subcellular location is the cell membrane. The chain is Putative sugar uptake protein LJ_0170 from Lactobacillus johnsonii (strain CNCM I-12250 / La1 / NCC 533).